A 150-amino-acid chain; its full sequence is 3-dehydroquinate dehydratase (150 aa).

Residue tyrosine 26 is the Proton acceptor of the active site. Positions 77, 83, and 90 each coordinate substrate. Histidine 103 functions as the Proton donor in the catalytic mechanism. Substrate-binding positions include 104-105 (IS) and arginine 114.

Belongs to the type-II 3-dehydroquinase family. As to quaternary structure, homododecamer.

The catalysed reaction is 3-dehydroquinate = 3-dehydroshikimate + H2O. It participates in metabolic intermediate biosynthesis; chorismate biosynthesis; chorismate from D-erythrose 4-phosphate and phosphoenolpyruvate: step 3/7. In terms of biological role, catalyzes a trans-dehydration via an enolate intermediate. This chain is 3-dehydroquinate dehydratase, found in Buchnera aphidicola subsp. Acyrthosiphon pisum (strain 5A).